The primary structure comprises 444 residues: UDP-N-acetylmuramoylalanine--D-glutamate ligase (444 aa).

Position 118 to 124 (118 to 124 (GTNGKTT)) interacts with ATP.

Belongs to the MurCDEF family.

It is found in the cytoplasm. The enzyme catalyses UDP-N-acetyl-alpha-D-muramoyl-L-alanine + D-glutamate + ATP = UDP-N-acetyl-alpha-D-muramoyl-L-alanyl-D-glutamate + ADP + phosphate + H(+). It functions in the pathway cell wall biogenesis; peptidoglycan biosynthesis. In terms of biological role, cell wall formation. Catalyzes the addition of glutamate to the nucleotide precursor UDP-N-acetylmuramoyl-L-alanine (UMA). The polypeptide is UDP-N-acetylmuramoylalanine--D-glutamate ligase (Protochlamydia amoebophila (strain UWE25)).